We begin with the raw amino-acid sequence, 124 residues long: Protein ApaG (124 aa).

The region spanning 1-124 (MSRYELTVQV…FALAMPRMLH (124 aa)) is the ApaG domain.

The chain is Protein ApaG from Ralstonia nicotianae (strain ATCC BAA-1114 / GMI1000) (Ralstonia solanacearum).